The sequence spans 419 residues: NF-kappa-B essential modulator (419 aa).

The disordered stretch occupies residues 1–46 (MSRTPWKSQPCEMVQPSGGPAGDQDVLGEESSLGKPTMLHLPSEQG). The required for interaction with and ubiquitination by MARCHF2 stretch occupies residues 1–197 (MSRTPWKSQP…REALQQQHSV (197 aa)). A phosphoserine mark is found at Ser31, Ser43, Ser68, and Ser85. Residues 44 to 111 (EQGAPETFQR…RLVERLSLEK (68 aa)) are interaction with CHUK/IKBKB. Residues 100-353 (ARRLVERLSL…KTSCQESARI (254 aa)) are a coiled coil. Residues Lys111, Lys139, Lys143, Lys226, Lys246, and Lys264 each participate in a glycyl lysine isopeptide (Lys-Gly) (interchain with G-Cter in ubiquitin) cross-link. The tract at residues 150-257 (LGELQESQSR…SVVSSERNRG (108 aa)) is interaction with TANK. The tract at residues 242 to 350 (DNHIKSSVVS…SRLKTSCQES (109 aa)) is ubiquitin-binding (UBAN). The tract at residues 246–365 (KSSVVSSERN…MRKRHVEVSQ (120 aa)) is self-association. The required for interaction with TNFAIP3 stretch occupies residues 251–419 (SSERNRGLQL…LQIHVMECIE (169 aa)). A Glycyl lysine isopeptide (Lys-Gly) (interchain with G-Cter in SUMO); alternate cross-link involves residue Lys277. Lys277 participates in a covalent cross-link: Glycyl lysine isopeptide (Lys-Gly) (interchain with G-Cter in ubiquitin); alternate. Residues Lys283, Lys285, Lys292, and Lys302 each participate in a glycyl lysine isopeptide (Lys-Gly) (interchain with G-Cter in ubiquitin) cross-link. Lys309 participates in a covalent cross-link: Glycyl lysine isopeptide (Lys-Gly) (interchain with G-Cter in SUMO); alternate. Lys309 participates in a covalent cross-link: Glycyl lysine isopeptide (Lys-Gly) (interchain with G-Cter in ubiquitin); alternate. Positions 322–343 (LAERKELLQEQLEQLQREYSRL) are leucine-zipper. Lys326 is covalently cross-linked (Glycyl lysine isopeptide (Lys-Gly) (interchain with G-Cter in ubiquitin)). Residues 363–394 (VSQPTLPPAPAHHSFHPALPSQRRSPPEEPPN) form a disordered region. Ser376 and Ser387 each carry phosphoserine. An interaction with CYLD region spans residues 382–419 (PSQRRSPPEEPPNFCCPKCQYQAPDMDTLQIHVMECIE). Residues 389 to 419 (PEEPPNFCCPKCQYQAPDMDTLQIHVMECIE) form a CCHC NOA-type zinc finger. Position 397 (Cys397) interacts with Zn(2+). Lys399 is covalently cross-linked (Glycyl lysine isopeptide (Lys-Gly) (interchain with G-Cter in ubiquitin)). Residues Cys400, His413, and Cys417 each coordinate Zn(2+).

As to quaternary structure, homodimer; disulfide-linked. Component of the I-kappa-B-kinase (IKK) core complex consisting of CHUK, IKBKB and IKBKG; probably four alpha/CHUK-beta/IKBKB dimers are associated with four gamma/IKBKG subunits. The IKK core complex seems to associate with regulatory or adapter proteins to form a IKK-signalosome holo-complex. The IKK complex associates with TERF2IP/RAP1, leading to promote IKK-mediated phosphorylation of RELA/p65. Part of a complex composed of NCOA2, NCOA3, CHUK/IKKA, IKBKB, IKBKG and CREBBP. Interacts with COPS3, CYLD, NALP2, TRPC4AP and PIDD1. Interacts with ATM; the complex is exported from the nucleus. Interacts with TRAF6. Interacts with IKBKE. Interacts with TANK; the interaction is enhanced by IKBKE and TBK1. Part of a ternary complex consisting of TANK, IKBKB and IKBKG. Interacts with ZFAND5. Interacts with RIPK2. Interacts with TNIP1 and TNFAIP3; TNIP1 facilitates the TNFAIP3-mediated de-ubiquitination of IKBKG. Interacts with TNFAIP3; the interaction is induced by TNF stimulation and by polyubiquitin. Binds (via UBAN region) polyubiquitin; binds both 'Lys-63'-linked and linear polyubiquitin, with higher affinity for linear ubiquitin. Interacts with NLRP10. Interacts with TANK; this interaction increases in response to DNA damage. Interacts with USP10; this interaction increases in response to DNA damage. Interacts with ZC3H12A; this interaction increases in response to DNA damage. Interacts with IFIT5; the interaction synergizes the recruitment of IKK to MAP3K7 and enhances IKK phosphorylation. Interacts with TRIM29; this interaction induces IKBKG/NEMO ubiquitination and proteolytic degradation. Interacts with TRIM13; this interaction leads to IKBKG/NEMO ubiquitination. Interacts with ARFIP2. Interacts with RIPK1. Interacts with (ubiquitinated) BCL10; interaction with polyubiquitinated BCL10 via both 'Lys-63'-linked and linear ubiquitin is required for TCR-induced NF-kappa-B activation. Interacts with MARCHF2; during the late stages of macrophage viral and bacterial infection; the interaction leads to ubiquitination and degradation of IKBKG/NEMO. Phosphorylation at Ser-68 attenuates aminoterminal homodimerization. In terms of processing, polyubiquitinated on Lys-285 via 'Lys-63'-linked ubiquitin; the ubiquitination is mediated downstream of NOD2 and RIPK2 and probably plays a role in signaling by facilitating interactions with ubiquitin domain-containing proteins and activates the NF-kappa-B pathway. Polyubiquitinated on Lys-285 and Lys-399 through 'Lys-63'-linked ubiquitin; the ubiquitination is mediated by BCL10, MALT1 and TRAF6 and probably plays a role in signaling by facilitating interactions with ubiquitin domain-containing proteins and activates the NF-kappa-B pathway. Monoubiquitinated on Lys-277 and Lys-309; promotes nuclear export. Polyubiquitinated through 'Lys-27' by TRIM23; involved in antiviral innate and inflammatory responses. Linear polyubiquitinated on Lys-111, Lys-143, Lys-226, Lys-246, Lys-264, Lys-277, Lys-285, Lys-292, Lys-302, Lys-309 and Lys-326; the head-to-tail polyubiquitination is mediated by the LUBAC complex and plays a key role in NF-kappa-B activation. Deubiquitinated by USP10 in a TANK-dependent and -independent manner, leading to the negative regulation of NF-kappa-B signaling upon DNA damage. Ubiquitinated at Lys-326 by MARCHF2 following bacterial and viral infection which leads to its degradation. Post-translationally, sumoylated on Lys-277 and Lys-309 with SUMO1; the modification results in phosphorylation of Ser-85 by ATM leading to a replacement of the sumoylation by mono-ubiquitination on these residues. Neddylated by TRIM40, resulting in stabilization of NFKBIA and down-regulation of NF-kappa-B activity. In terms of processing, (Microbial infection) Cleaved by porcine reproductive and respiratory syndrome virus serine protease nsp4 after Glu-349. The cleavage inhibits NEMO proper function.

It localises to the cytoplasm. It is found in the nucleus. Regulatory subunit of the IKK core complex which phosphorylates inhibitors of NF-kappa-B thus leading to the dissociation of the inhibitor/NF-kappa-B complex and ultimately the degradation of the inhibitor. Its binding to scaffolding polyubiquitin plays a key role in IKK activation by multiple signaling receptor pathways. Can recognize and bind both 'Lys-63'-linked and linear polyubiquitin upon cell stimulation, with a much highr affinity for linear polyubiquitin. Could be implicated in NF-kappa-B-mediated protection from cytokine toxicity. Essential for viral activation of IRF3. Involved in TLR3- and IFIH1-mediated antiviral innate response; this function requires 'Lys-27'-linked polyubiquitination. This is NF-kappa-B essential modulator (IKBKG) from Sus scrofa (Pig).